We begin with the raw amino-acid sequence, 585 residues long: Adenine deaminase (585 aa).

The protein belongs to the metallo-dependent hydrolases superfamily. Adenine deaminase family. Mn(2+) serves as cofactor.

It carries out the reaction adenine + H2O + H(+) = hypoxanthine + NH4(+). In Halalkalibacterium halodurans (strain ATCC BAA-125 / DSM 18197 / FERM 7344 / JCM 9153 / C-125) (Bacillus halodurans), this protein is Adenine deaminase.